Consider the following 296-residue polypeptide: Phosphatidylglycerol--prolipoprotein diacylglyceryl transferase (296 aa).

4 helical membrane-spanning segments follow: residues 10 to 30 (IAFS…LAAF), 57 to 77 (LLFY…MLFY), 92 to 112 (VWEG…ACWL), and 119 to 139 (LHFF…LGFG). A 1,2-diacyl-sn-glycero-3-phospho-(1'-sn-glycerol) is bound at residue Arg-140. The next 3 membrane-spanning stretches (helical) occupy residues 194–214 (QLYE…TFSM), 220–240 (YAVS…VEFV), and 254–274 (WLTM…VLLA).

This sequence belongs to the Lgt family.

The protein localises to the cell inner membrane. It carries out the reaction L-cysteinyl-[prolipoprotein] + a 1,2-diacyl-sn-glycero-3-phospho-(1'-sn-glycerol) = an S-1,2-diacyl-sn-glyceryl-L-cysteinyl-[prolipoprotein] + sn-glycerol 1-phosphate + H(+). Its pathway is protein modification; lipoprotein biosynthesis (diacylglyceryl transfer). In terms of biological role, catalyzes the transfer of the diacylglyceryl group from phosphatidylglycerol to the sulfhydryl group of the N-terminal cysteine of a prolipoprotein, the first step in the formation of mature lipoproteins. The protein is Phosphatidylglycerol--prolipoprotein diacylglyceryl transferase of Xanthomonas euvesicatoria pv. vesicatoria (strain 85-10) (Xanthomonas campestris pv. vesicatoria).